We begin with the raw amino-acid sequence, 351 residues long: sn-glycerol-3-phosphate import ATP-binding protein UgpC (351 aa).

Residues 4–234 (ITLKDLVKSY…PATLFVAGFI (231 aa)) enclose the ABC transporter domain. 36–43 (GPSGCGKS) contributes to the ATP binding site.

It belongs to the ABC transporter superfamily. sn-glycerol-3-phosphate importer (TC 3.A.1.1.3) family. As to quaternary structure, the complex is composed of two ATP-binding proteins (UgpC), two transmembrane proteins (UgpA and UgpE) and a solute-binding protein (UgpB).

Its subcellular location is the cell inner membrane. The catalysed reaction is sn-glycerol 3-phosphate(out) + ATP + H2O = sn-glycerol 3-phosphate(in) + ADP + phosphate + H(+). Its function is as follows. Part of the ABC transporter complex UgpBAEC involved in sn-glycerol-3-phosphate (G3P) import. Responsible for energy coupling to the transport system. The sequence is that of sn-glycerol-3-phosphate import ATP-binding protein UgpC from Ruegeria sp. (strain TM1040) (Silicibacter sp.).